A 949-amino-acid chain; its full sequence is Protein translocase subunit SecA 1 (949 aa).

Residues glutamine 86, 104 to 108, and aspartate 493 each bind ATP; that span reads GEGKT. Residues 869 to 949 are disordered; sequence VDGGARERAP…AKPPKSVKKR (81 aa). The span at 925-934 shows a compositional bias: basic and acidic residues; that stretch reads SRRERREAAR.

The protein belongs to the SecA family. As to quaternary structure, monomer and homodimer. Part of the essential Sec protein translocation apparatus which comprises SecA, SecYEG and auxiliary proteins SecDF. Other proteins may also be involved.

The protein resides in the cell membrane. The protein localises to the cytoplasm. It catalyses the reaction ATP + H2O + cellular proteinSide 1 = ADP + phosphate + cellular proteinSide 2.. Part of the Sec protein translocase complex. Interacts with the SecYEG preprotein conducting channel. Has a central role in coupling the hydrolysis of ATP to the transfer of proteins into and across the cell membrane, serving as an ATP-driven molecular motor driving the stepwise translocation of polypeptide chains across the membrane. The polypeptide is Protein translocase subunit SecA 1 (Mycobacterium bovis (strain ATCC BAA-935 / AF2122/97)).